Here is a 282-residue protein sequence, read N- to C-terminus: Putative hydrolase Bcep18194_B0137 (282 aa).

Glu-124, Glu-126, and Asp-155 together coordinate Mg(2+).

Belongs to the FAH family. Mg(2+) is required as a cofactor.

The protein is Putative hydrolase Bcep18194_B0137 of Burkholderia lata (strain ATCC 17760 / DSM 23089 / LMG 22485 / NCIMB 9086 / R18194 / 383).